Reading from the N-terminus, the 555-residue chain is Galectin-3-binding protein (555 aa).

Residues 1–18 (MAPLRLFWIWLLVVGTRG) form the signal peptide. The region spanning 24–124 (MRLADGGSAN…HDKDASVICT (101 aa)) is the SRCR domain. Disulfide bonds link Cys-49/Cys-113, Cys-62/Cys-123, and Cys-93/Cys-103. Residue Asn-69 is glycosylated (N-linked (GlcNAc...) asparagine). The N-linked (GlcNAc...) asparagine glycan is linked to Asn-125. Residues 153–221 (CDLFITVKVR…LYSRRIDVSL (69 aa)) enclose the BTB domain. The BACK domain occupies 260–360 (PLELYAYALA…MPPQDLFSLQ (101 aa)). N-linked (GlcNAc...) asparagine glycosylation is found at Asn-362, Asn-398, and Asn-550.

As to quaternary structure, homodimers and homomultimers. The multimers form ring-like structures with a diameter of 30-40 nm. Binds LGALS1 and LGALS3. Binds ITGB1, COL4A1, COL5A1, COL6A1, FN1 and NID. Interacts with the gamma-tubulin ring complex (gamma-TuRC), composed of gamma-tubulin, TUBGCP2, TUBGCP3, TUBGCP4, TUBGCP5 and TUBGCP6. The unglycosylated form interacts with PDE4DIP; this interaction, which is PDE4DIP isoform-specific, may connect a pericentrosomal complex, made of AKAP9, CDK5RAP2, EB1/MAPRE1 and PDE4DIP, to the gamma-tubulin ring complex (gamma-TuRC) to promote microtubule assembly and acetylation.

Its subcellular location is the secreted. The protein localises to the extracellular space. It localises to the extracellular matrix. In terms of biological role, promotes integrin-mediated cell adhesion. May stimulate host defense against viruses and tumor cells. The sequence is that of Galectin-3-binding protein (LGALS3BP) from Bos taurus (Bovine).